A 257-amino-acid polypeptide reads, in one-letter code: Imidazole glycerol phosphate synthase subunit HisF (257 aa).

Residues D11 and D130 contribute to the active site.

Belongs to the HisA/HisF family. In terms of assembly, heterodimer of HisH and HisF.

It is found in the cytoplasm. The enzyme catalyses 5-[(5-phospho-1-deoxy-D-ribulos-1-ylimino)methylamino]-1-(5-phospho-beta-D-ribosyl)imidazole-4-carboxamide + L-glutamine = D-erythro-1-(imidazol-4-yl)glycerol 3-phosphate + 5-amino-1-(5-phospho-beta-D-ribosyl)imidazole-4-carboxamide + L-glutamate + H(+). It functions in the pathway amino-acid biosynthesis; L-histidine biosynthesis; L-histidine from 5-phospho-alpha-D-ribose 1-diphosphate: step 5/9. Its function is as follows. IGPS catalyzes the conversion of PRFAR and glutamine to IGP, AICAR and glutamate. The HisF subunit catalyzes the cyclization activity that produces IGP and AICAR from PRFAR using the ammonia provided by the HisH subunit. The chain is Imidazole glycerol phosphate synthase subunit HisF from Actinobacillus succinogenes (strain ATCC 55618 / DSM 22257 / CCUG 43843 / 130Z).